Reading from the N-terminus, the 487-residue chain is DNA ligase (487 aa).

Lysine 159 acts as the N6-AMP-lysine intermediate in catalysis. Residues arginine 164, arginine 182, and glutamate 217 each coordinate ATP. Residue glutamate 217 coordinates a divalent metal cation. The segment at 229–237 (EGLDFLFDA) is interaction with the sliding clamp. Glutamate 344 serves as a coordination point for a divalent metal cation. Arginine 359 and lysine 365 together coordinate ATP.

It belongs to the ATP-dependent DNA ligase family. In terms of assembly, interacts with the sliding clamp. The cofactor is a divalent metal cation.

The catalysed reaction is ATP + (deoxyribonucleotide)n-3'-hydroxyl + 5'-phospho-(deoxyribonucleotide)m = (deoxyribonucleotide)n+m + AMP + diphosphate.. DNA ligase, which is expressed in the early stage of lytic development, has been implicated in T4 DNA synthesis and genetic recombination. It may also play a role in T4 DNA repair. This is DNA ligase (30) from Escherichia coli (Bacteriophage T6).